Reading from the N-terminus, the 685-residue chain is DEAD-box ATP-dependent RNA helicase 7 (685 aa).

Residues 1 to 89 (MPSISMMSDA…SELVQADDLK (89 aa)) are disordered. Basic and acidic residues-rich tracts occupy residues 22-42 (MKSE…SSSK) and 66-78 (AVDL…KSDN). Residues 107–135 (NSLSNFRISKPLKDVLISKGIKALFPIQA) carry the Q motif motif. Positions 138–320 (FDNVIDGCDL…TRFLKSAKKT (183 aa)) constitute a Helicase ATP-binding domain. 151-158 (ARTGQGKT) provides a ligand contact to ATP. Positions 266-269 (DEAD) match the DEAD box motif. The Helicase C-terminal domain occupies 349–491 (DLIPDIIRCY…LSAPQPVDVA (143 aa)).

This sequence belongs to the DEAD box helicase family. DDX21/DDX50 subfamily.

The protein resides in the nucleus. It catalyses the reaction ATP + H2O = ADP + phosphate + H(+). The protein is DEAD-box ATP-dependent RNA helicase 7 (RH7) of Spinacia oleracea (Spinach).